The primary structure comprises 610 residues: MSQTSLKQKKNEPGMRSSKESLEAEKRKESDKTGVRLSNQMRRAVNPNHSLRCCPFQGHSSCRRCLCAAEGTALGPCHTIRIYIHMCLLWEQGQQITMMRGSQESSLRKTDSRGYLVRSQWSRISRSPSTKAPSIDEPRSRNTSAKLPSSSTSSRTPSTSPSLHDSSPPPLSGQPSLQPPASPQLPRSLDSRPPTPPEPDPGSRRSTKMQENPEAWAQGIVREIRQTRDSQPLEYSRTSPTEWKSSSQRRGIYPASTQLDRNSLSEQQQQQREDEDDYEAAYWASMRSFYEKNPSCSRPWPPKPKNAITIALSSCALFNMVDGRKIYEQEGLEKYMEYQLTNENVILTPGPAFRFVKALQYVNARLRDLYPDEQDLFDIVLMTNNHAQVGVRLINSVNHYGLLIDRFCLTGGKDPIGYLKAYLTNLYIAADSEKVQEAIQEGIASATMFDGAKDMAYCDTQLRVAFDGDAVLFSDESEHFTKEHGLDKFFQYDTLCESKPLAQGPLKGFLEDLGRLQKKFYAKNERLLCPIRTYLVTARSAASSGARVLKTLRRWGLEIDEALFLAGAPKSPILVKIRPHIFFDDHMFHIEGAQRLGSIAAYGFNKKFSS.

Disordered regions lie at residues Met-1–Gly-34 and Gly-101–Asp-277. Residues Lys-9–Gly-34 show a composition bias toward basic and acidic residues. Positions Ser-119–Ala-132 are enriched in polar residues. Residues Pro-148–Ser-166 are compositionally biased toward low complexity. Residues Ser-167–Pro-183 show a composition bias toward pro residues. Residues Ser-236 to Ser-265 are compositionally biased toward polar residues. The active-site Nucleophile is the Asp-467.

Belongs to the 5'-nucleotidase type 3 family. Requires Mg(2+) as cofactor. As to expression, highly expressed in testis, placenta and pancreas. Detected at lower levels in heart, kidney, liver and lung.

It is found in the cytoplasm. It catalyses the reaction a ribonucleoside 5'-phosphate + H2O = a ribonucleoside + phosphate. The enzyme catalyses AMP + H2O = adenosine + phosphate. Its activity is regulated as follows. Activated by ADP. Functionally, catalyzes the hydrolysis of nucleotide monophosphates, releasing inorganic phosphate and the corresponding nucleoside, AMP is the major substrate. The chain is Cytosolic 5'-nucleotidase 1B (NT5C1B) from Homo sapiens (Human).